We begin with the raw amino-acid sequence, 209 residues long: Endonuclease III (209 aa).

The HhH domain occupies 108-127 (RTELESLPGVGRKTANIILN). Residues Cys187, Cys194, Cys197, and Cys203 each contribute to the [4Fe-4S] cluster site.

This sequence belongs to the Nth/MutY family. The cofactor is [4Fe-4S] cluster.

The enzyme catalyses 2'-deoxyribonucleotide-(2'-deoxyribose 5'-phosphate)-2'-deoxyribonucleotide-DNA = a 3'-end 2'-deoxyribonucleotide-(2,3-dehydro-2,3-deoxyribose 5'-phosphate)-DNA + a 5'-end 5'-phospho-2'-deoxyribonucleoside-DNA + H(+). In terms of biological role, DNA repair enzyme that has both DNA N-glycosylase activity and AP-lyase activity. The DNA N-glycosylase activity releases various damaged pyrimidines from DNA by cleaving the N-glycosidic bond, leaving an AP (apurinic/apyrimidinic) site. The AP-lyase activity cleaves the phosphodiester bond 3' to the AP site by a beta-elimination, leaving a 3'-terminal unsaturated sugar and a product with a terminal 5'-phosphate. The sequence is that of Endonuclease III from Buchnera aphidicola subsp. Schizaphis graminum (strain Sg).